Reading from the N-terminus, the 483-residue chain is Sphingomyelin phosphodiesterase 5 (483 aa).

Residues 1–20 (MSLPDISRRRSPVPQEDWPL) are disordered. A helical membrane pass occupies residues 80–100 (VLLPLVVVGLPLALVGLALWL). E209 lines the Mg(2+) pocket. H471 acts as the Proton acceptor in catalysis.

It belongs to the neutral sphingomyelinase family. It depends on Mg(2+) as a cofactor. Mn(2+) serves as cofactor. As to expression, highly expressed in testis, pancreas, epididymis, and brain.

It is found in the mitochondrion inner membrane. The protein resides in the endoplasmic reticulum membrane. It carries out the reaction a sphingomyelin + H2O = phosphocholine + an N-acylsphing-4-enine + H(+). It catalyses the reaction N-(hexadecanoyl)-sphing-4-enine-1-phosphocholine + H2O = N-hexadecanoylsphing-4-enine + phosphocholine + H(+). The protein operates within lipid metabolism; sphingolipid metabolism. Its activity is regulated as follows. Activated by anionic phospholipids, specially cardiolipin and phosphatidylserine. Its function is as follows. Catalyzes the hydrolysis of membrane sphingomyelin to form phosphorylcholine and ceramide. This is Sphingomyelin phosphodiesterase 5 from Mus musculus (Mouse).